The primary structure comprises 990 residues: Aminopeptidase Q (990 aa).

At 2 to 13 (GPPSSSGFYVSR) the chain is on the cytoplasmic side. The chain crosses the membrane as a helical; Signal-anchor for type II membrane protein span at residues 14-34 (AVALLLAGLVAALLLALAVLA). Topologically, residues 35–990 (ALYGHCERVP…RIAAWLRRNT (956 aa)) are lumenal. A disordered region spans residues 48 to 91 (LPGLRDLEAESSPPLRQKPTPTPKPSSARELAVTTTPSNWRPPG). N132 and N168 each carry an N-linked (GlcNAc...) asparagine glycan. Residue E240 coordinates substrate. N261, N288, N319, and N346 each carry an N-linked (GlcNAc...) asparagine glycan. 379–383 (HAMEN) serves as a coordination point for substrate. H415 lines the Zn(2+) pocket. E416 functions as the Proton acceptor in the catalytic mechanism. The Zn(2+) site is built by H419 and E438. Y503 serves as the catalytic Proton donor. N-linked (GlcNAc...) asparagine glycosylation is found at N607 and N653.

Belongs to the peptidase M1 family. In terms of assembly, homodimer. The cofactor is Zn(2+). N-glycosylated. In terms of tissue distribution, specifically expressed in placenta and not in other tissues. Mainly found at the cell surface region of the extravillous trophoblasts. Detected on extravillous trophoblasts in the outer layer of the chorion laeve in the fetal membrane Not detected on either fetal amnionic epithelial cells or maternal decidual cells. Also detected in the migrating extravillous trophoblasts in the maternal decidual tissues (at protein level).

It localises to the membrane. Inhibited by bestatin. Metalloprotease which may be important for placentation by regulating biological activity of key peptides at the embryo-maternal interface. On synthetic substrates it shows a marked preference for Leu-4-methylcoumaryl-7-amide (Leu-MCA) over Met-MCA, Arg-LCA and Lys-LCA. Cleaves the N-terminal amino acid of several peptides such as angiotensin-3, kisspeptin-10 and endokinin C. This chain is Aminopeptidase Q, found in Homo sapiens (Human).